The chain runs to 639 residues: ATP-dependent zinc metalloprotease FtsH (639 aa).

The Cytoplasmic portion of the chain corresponds to 1 to 15; it reads MDNEKQASPPPAAPP. The helical transmembrane segment at 16 to 36 threads the bilayer; it reads LNWRYLLWIILLGIFLISWLG. Over 37–123 the chain is Periplasmic; that stretch reads NAGRQAGDEI…VQAKSEEPSL (87 aa). Residues 124–144 form a helical membrane-spanning segment; that stretch reads WMQAIIGILPWFLILGLIFYV. Over 145-639 the chain is Cytoplasmic; sequence SYRMQQRMMG…HNEAVATGAG (495 aa). 221–228 serves as a coordination point for ATP; the sequence is GRPGTGKT. Position 442 (His-442) interacts with Zn(2+). Residue Glu-443 is part of the active site. His-446 and Asp-518 together coordinate Zn(2+).

It in the central section; belongs to the AAA ATPase family. The protein in the C-terminal section; belongs to the peptidase M41 family. In terms of assembly, homohexamer. Zn(2+) serves as cofactor.

Its subcellular location is the cell inner membrane. In terms of biological role, acts as a processive, ATP-dependent zinc metallopeptidase for both cytoplasmic and membrane proteins. Plays a role in the quality control of integral membrane proteins. The sequence is that of ATP-dependent zinc metalloprotease FtsH from Nitrosococcus oceani (strain ATCC 19707 / BCRC 17464 / JCM 30415 / NCIMB 11848 / C-107).